We begin with the raw amino-acid sequence, 92 residues long: Small ribosomal subunit protein uS19c (92 aa).

The protein belongs to the universal ribosomal protein uS19 family.

The protein localises to the plastid. It localises to the chloroplast. Its function is as follows. Protein S19 forms a complex with S13 that binds strongly to the 16S ribosomal RNA. The polypeptide is Small ribosomal subunit protein uS19c (Daucus carota (Wild carrot)).